The chain runs to 151 residues: Endoribonuclease YbeY (151 aa).

Zn(2+)-binding residues include His113, His117, and His123.

The protein belongs to the endoribonuclease YbeY family. Zn(2+) is required as a cofactor.

The protein resides in the cytoplasm. Its function is as follows. Single strand-specific metallo-endoribonuclease involved in late-stage 70S ribosome quality control and in maturation of the 3' terminus of the 16S rRNA. The protein is Endoribonuclease YbeY of Polaromonas naphthalenivorans (strain CJ2).